Here is a 428-residue protein sequence, read N- to C-terminus: 3-phosphoshikimate 1-carboxyvinyltransferase (428 aa).

The 3-phosphoshikimate site is built by K22, S23, and R27. Phosphoenolpyruvate is bound at residue K22. The phosphoenolpyruvate site is built by G96 and R124. 3-phosphoshikimate-binding residues include S170, S171, Q172, S198, D314, N337, and K341. Q172 provides a ligand contact to phosphoenolpyruvate. D314 functions as the Proton acceptor in the catalytic mechanism. The phosphoenolpyruvate site is built by R345, R387, and K412.

It belongs to the EPSP synthase family. As to quaternary structure, monomer.

The protein localises to the cytoplasm. The catalysed reaction is 3-phosphoshikimate + phosphoenolpyruvate = 5-O-(1-carboxyvinyl)-3-phosphoshikimate + phosphate. It participates in metabolic intermediate biosynthesis; chorismate biosynthesis; chorismate from D-erythrose 4-phosphate and phosphoenolpyruvate: step 6/7. Catalyzes the transfer of the enolpyruvyl moiety of phosphoenolpyruvate (PEP) to the 5-hydroxyl of shikimate-3-phosphate (S3P) to produce enolpyruvyl shikimate-3-phosphate and inorganic phosphate. This is 3-phosphoshikimate 1-carboxyvinyltransferase from Shewanella amazonensis (strain ATCC BAA-1098 / SB2B).